Here is a 276-residue protein sequence, read N- to C-terminus: Pantothenate synthetase (276 aa).

26–33 (MGFLHAGH) serves as a coordination point for ATP. Residue H33 is the Proton donor of the active site. Q57 is a binding site for (R)-pantoate. A beta-alanine-binding site is contributed by Q57. Residue 143-146 (GQKD) participates in ATP binding. Residue Q149 participates in (R)-pantoate binding. ATP contacts are provided by residues I172 and 180 to 183 (MSSR).

It belongs to the pantothenate synthetase family. Homodimer.

The protein localises to the cytoplasm. It carries out the reaction (R)-pantoate + beta-alanine + ATP = (R)-pantothenate + AMP + diphosphate + H(+). Its pathway is cofactor biosynthesis; (R)-pantothenate biosynthesis; (R)-pantothenate from (R)-pantoate and beta-alanine: step 1/1. Its function is as follows. Catalyzes the condensation of pantoate with beta-alanine in an ATP-dependent reaction via a pantoyl-adenylate intermediate. The polypeptide is Pantothenate synthetase (Herpetosiphon aurantiacus (strain ATCC 23779 / DSM 785 / 114-95)).